The sequence spans 316 residues: Ornithine carbamoyltransferase (316 aa).

Carbamoyl phosphate is bound by residues 59–62 (STRT), Gln-86, Arg-110, and 137–140 (HPCQ). L-ornithine contacts are provided by residues Asn-168, Asp-232, and 236–237 (SM). Carbamoyl phosphate-binding positions include 273–274 (CL) and Arg-301.

It belongs to the aspartate/ornithine carbamoyltransferase superfamily. OTCase family.

It localises to the cytoplasm. The catalysed reaction is carbamoyl phosphate + L-ornithine = L-citrulline + phosphate + H(+). Its pathway is amino-acid degradation; L-arginine degradation via ADI pathway; carbamoyl phosphate from L-arginine: step 2/2. In terms of biological role, reversibly catalyzes the transfer of the carbamoyl group from carbamoyl phosphate (CP) to the N(epsilon) atom of ornithine (ORN) to produce L-citrulline. The chain is Ornithine carbamoyltransferase from Listeria monocytogenes serotype 4a (strain HCC23).